Reading from the N-terminus, the 375-residue chain is Outer membrane porin OmpD (375 aa).

The signal sequence occupies residues 1 to 34; sequence MRKHAKKIIRIIKMKLKLVAVAVTSLLAAGVVNA.

Belongs to the Gram-negative porin family. Homotrimer. Mixed heterotrimers with other porins are also probable.

Its subcellular location is the cell outer membrane. Functionally, forms pores that allow passive diffusion of small molecules across the outer membrane. The polypeptide is Outer membrane porin OmpD (Salmonella typhimurium (strain SL1344)).